A 634-amino-acid polypeptide reads, in one-letter code: Growth hormone receptor (634 aa).

A signal peptide spans 1–18 (MDLWQLLLTLAVAGSSDA). At 19–260 (FSGSEATPAF…NPSACEEDFQ (242 aa)) the chain is on the extracellular side. Residue asparagine 46 is glycosylated (N-linked (GlcNAc...) asparagine). The cysteines at positions 56 and 66 are disulfide-linked. A glycan (N-linked (GlcNAc...) asparagine) is linked at asparagine 73. Cysteine 97 and cysteine 108 are disulfide-bonded. Residue asparagine 111 is glycosylated (N-linked (GlcNAc...) asparagine). A disulfide bond links cysteine 122 and cysteine 136. Residues 147–250 (PPVGLNWTLL…EVLLITFPQM (104 aa)) enclose the Fibronectin type-III domain. Asparagine 152, asparagine 157, and asparagine 196 each carry an N-linked (GlcNAc...) asparagine glycan. The WSXWS motif signature appears at 236–240 (YGKFS). The chain crosses the membrane as a helical span at residues 261–284 (FPWFLIIIFGILGLAVTLYLLIFS). Topologically, residues 285–634 (KQQRIKMLIL…STDQLNKIMP (350 aa)) are cytoplasmic. Residues 290–375 (KMLILPPVPV…HEKSLNIFGA (86 aa)) form a required for JAK2 binding region. The Box 1 motif signature appears at 293-301 (ILPPVPVPK). Residues 336-345 (DSWVEFIELD) carry the UbE motif motif. Serine 337 carries the phosphoserine modification.

It belongs to the type I cytokine receptor family. Type 1 subfamily. In terms of assembly, on growth hormone (GH) binding, forms homodimers and binds JAK2 via a box 1-containing domain. In terms of processing, the soluble form (GHBP) is produced by phorbol ester-promoted proteolytic cleavage at the cell surface (shedding) by ADAM17/TACE. Shedding is inhibited by growth hormone (GH) binding to the receptor probably due to a conformational change in GHR rendering the receptor inaccessible to ADAM17. Post-translationally, on GH binding, phosphorylated on tyrosine residues in the cytoplasmic domain by JAK2. Ubiquitinated by the ECS(SOCS2) complex following ligand-binding and phosphorylation by JAK2, leading to its degradation by the proteasome. Regulation by the ECS(SOCS2) complex acts as a negative feedback loop of growth hormone receptor signaling. Ubiquitination is not sufficient for GHR internalization.

The protein localises to the cell membrane. It is found in the secreted. In terms of biological role, receptor for pituitary gland growth hormone (GH1) involved in regulating postnatal body growth. On ligand binding, couples to the JAK2/STAT5 pathway. The soluble form (GHBP) acts as a reservoir of growth hormone in plasma and may be a modulator/inhibitor of GH signaling. This Bos taurus (Bovine) protein is Growth hormone receptor (GHR).